Here is a 572-residue protein sequence, read N- to C-terminus: E3 ubiquitin-protein ligase ZFP91 (572 aa).

The segment covering 1–12 has biased composition (basic and acidic residues); it reads MPGETEEPRSPE. A disordered region spans residues 1-308; it reads MPGETEEPRS…PRLPKRRKKP (308 aa). Positions 61–70 are enriched in low complexity; sequence AAAAAAAAAA. A compositionally biased stretch (basic residues) spans 72-85; sequence SRRRKAEYPRRRRS. A phosphoserine mark is found at Ser86 and Ser106. Basic and acidic residues predominate over residues 122–131; it reads LTTDKDPKEE. Positions 143–162 are enriched in low complexity; the sequence is SITTTRASRSWRSSSRTSIS. A compositionally biased stretch (acidic residues) spans 209-225; the sequence is SDEEEEEEEEMLISEEE. 2 stretches are compositionally biased toward basic and acidic residues: residues 226-247 and 254-271; these read IPFK…ETPK and KVKE…VEVE. Positions 272-284 are enriched in acidic residues; the sequence is VKEEENEIREDEE. 5 C2H2-type zinc fingers span residues 313-338, 344-368, 374-396, 402-424, and 432-455; these read VRCE…KYQH, YVCP…AKHH, YICE…RMIH, LQCE…MKKH, and FSCN…AKSH. The interaction with MAP3K14/NIK stretch occupies residues 340-370; that stretch reads LKKKYVCPHPSCGRLFRLQKQLLRHAKHHTD.

Belongs to the krueppel C2H2-type zinc-finger protein family. Interacts with MAP3K14/NIK. In terms of tissue distribution, found in all the examined tissues including brain, heart, kidney, lung, liver, spleen, thymus, skeletal muscle, ovary and testis.

The protein localises to the nucleus. The catalysed reaction is S-ubiquitinyl-[E2 ubiquitin-conjugating enzyme]-L-cysteine + [acceptor protein]-L-lysine = [E2 ubiquitin-conjugating enzyme]-L-cysteine + N(6)-ubiquitinyl-[acceptor protein]-L-lysine.. Its pathway is protein modification; protein ubiquitination. In terms of biological role, atypical E3 ubiquitin-protein ligase that mediates 'Lys-63'-linked ubiquitination of MAP3K14/NIK, leading to stabilize and activate MAP3K14/NIK. It thereby acts as an activator of the non-canonical NF-kappa-B2/NFKB2 pathway. May also play an important role in cell proliferation and/or anti-apoptosis. The chain is E3 ubiquitin-protein ligase ZFP91 (Zfp91) from Mus musculus (Mouse).